Here is a 486-residue protein sequence, read N- to C-terminus: Meiosis-specific nuclear structural protein 1 (486 aa).

2 coiled-coil regions span residues 52–198 (QIEE…KEKH) and 230–440 (EDFK…KQHA).

The protein belongs to the MNS1 family.

The protein localises to the nucleus. The protein resides in the cytoplasm. Its subcellular location is the cytoskeleton. It localises to the cilium axoneme. It is found in the flagellum axoneme. Microtubule inner protein (MIP) part of the dynein-decorated doublet microtubules (DMTs) in cilia axoneme, which is required for motile cilia beating. May play a role in the control of meiotic division and germ cell differentiation through regulation of pairing and recombination during meiosis. Required for sperm flagella assembly. May play a role in the assembly and function of the outer dynein arm-docking complex (ODA-DC). ODA-DC mediates outer dynein arms (ODA) binding onto the axonemal doublet microtubules. The polypeptide is Meiosis-specific nuclear structural protein 1 (mns1) (Danio rerio (Zebrafish)).